The chain runs to 467 residues: Light-independent protochlorophyllide reductase subunit N (467 aa).

The [4Fe-4S] cluster site is built by Cys22, Cys47, and Cys107.

Belongs to the BchN/ChlN family. As to quaternary structure, protochlorophyllide reductase is composed of three subunits; ChlL, ChlN and ChlB. Forms a heterotetramer of two ChlB and two ChlN subunits. [4Fe-4S] cluster serves as cofactor.

Its subcellular location is the plastid. The protein resides in the chloroplast. The enzyme catalyses chlorophyllide a + oxidized 2[4Fe-4S]-[ferredoxin] + 2 ADP + 2 phosphate = protochlorophyllide a + reduced 2[4Fe-4S]-[ferredoxin] + 2 ATP + 2 H2O. Its pathway is porphyrin-containing compound metabolism; chlorophyll biosynthesis (light-independent). Its function is as follows. Component of the dark-operative protochlorophyllide reductase (DPOR) that uses Mg-ATP and reduced ferredoxin to reduce ring D of protochlorophyllide (Pchlide) to form chlorophyllide a (Chlide). This reaction is light-independent. The NB-protein (ChlN-ChlB) is the catalytic component of the complex. The protein is Light-independent protochlorophyllide reductase subunit N of Chara vulgaris (Common stonewort).